The sequence spans 434 residues: Glutamate-1-semialdehyde 2,1-aminomutase 1 (434 aa).

Lysine 270 is modified (N6-(pyridoxal phosphate)lysine).

Belongs to the class-III pyridoxal-phosphate-dependent aminotransferase family. HemL subfamily. In terms of assembly, homodimer. It depends on pyridoxal 5'-phosphate as a cofactor.

The protein resides in the cytoplasm. The enzyme catalyses (S)-4-amino-5-oxopentanoate = 5-aminolevulinate. The protein operates within porphyrin-containing compound metabolism; protoporphyrin-IX biosynthesis; 5-aminolevulinate from L-glutamyl-tRNA(Glu): step 2/2. This Bacillus thuringiensis subsp. konkukian (strain 97-27) protein is Glutamate-1-semialdehyde 2,1-aminomutase 1.